We begin with the raw amino-acid sequence, 210 residues long: Large ribosomal subunit protein uL3 (210 aa).

Belongs to the universal ribosomal protein uL3 family. In terms of assembly, part of the 50S ribosomal subunit. Forms a cluster with proteins L14 and L19.

Functionally, one of the primary rRNA binding proteins, it binds directly near the 3'-end of the 23S rRNA, where it nucleates assembly of the 50S subunit. This is Large ribosomal subunit protein uL3 from Syntrophotalea carbinolica (strain DSM 2380 / NBRC 103641 / GraBd1) (Pelobacter carbinolicus).